The following is a 523-amino-acid chain: MSQQVIIFDTTLRDGEQALQASLSAKEKLQIALALERMGVDVMEVGFPVSSPGDFESVQTIARTIKNSRVCALARCVEKDIDVAAQALKVADAFRIHTFIATSPMHIATKLRSTLDEVIERAVYMIKRARNYTDDVEFSCEDAGRTPVDDLARVVEAAINAGARTINIPDTVGYTMPFEFAGIISGLYERVPNIDKAIISVHTHDDLGIAVGNSLAAVHAGARQVEGAMNGIGERAGNCALEEVIMAIKVRKDIMNVHTNINHHEIWRTSQTVSQICNMPIPANKAIVGSGAFAHSSGIHQDGVLKNRENYEIMTPESIGLNQIQLNLTSRSGRAAVKHRMEEMGYKDTDYNMDHLYDAFLKLADKKGQVFDYDLEALAFINKQQEEPEHFRLDYFSVQSGSSDIATASVKLACGEEIKAEAANGNGPVDAIYQAINRITGYDVELVKYDLNAKGQGKDALGQVDIVVNHHGRRFHGVGLATDIVESSAKAMVHVLNNIWRAAEVEKELQRKAQNKENNKETV.

The 263-residue stretch at 5 to 267 folds into the Pyruvate carboxyltransferase domain; sequence VIIFDTTLRD…HTNINHHEIW (263 aa). Mn(2+)-binding residues include Asp14, His202, His204, and Asn238. The segment at 392-523 is regulatory domain; the sequence is RLDYFSVQSG…QNKENNKETV (132 aa).

The protein belongs to the alpha-IPM synthase/homocitrate synthase family. LeuA type 1 subfamily. Homodimer. Requires Mn(2+) as cofactor.

Its subcellular location is the cytoplasm. It carries out the reaction 3-methyl-2-oxobutanoate + acetyl-CoA + H2O = (2S)-2-isopropylmalate + CoA + H(+). The protein operates within amino-acid biosynthesis; L-leucine biosynthesis; L-leucine from 3-methyl-2-oxobutanoate: step 1/4. Catalyzes the condensation of the acetyl group of acetyl-CoA with 3-methyl-2-oxobutanoate (2-ketoisovalerate) to form 3-carboxy-3-hydroxy-4-methylpentanoate (2-isopropylmalate). The sequence is that of 2-isopropylmalate synthase from Salmonella choleraesuis (strain SC-B67).